A 341-amino-acid polypeptide reads, in one-letter code: Phosphoribosylformylglycinamidine cyclo-ligase (341 aa).

This sequence belongs to the AIR synthase family.

The protein resides in the cytoplasm. The enzyme catalyses 2-formamido-N(1)-(5-O-phospho-beta-D-ribosyl)acetamidine + ATP = 5-amino-1-(5-phospho-beta-D-ribosyl)imidazole + ADP + phosphate + H(+). It functions in the pathway purine metabolism; IMP biosynthesis via de novo pathway; 5-amino-1-(5-phospho-D-ribosyl)imidazole from N(2)-formyl-N(1)-(5-phospho-D-ribosyl)glycinamide: step 2/2. In Synechococcus elongatus (strain ATCC 33912 / PCC 7942 / FACHB-805) (Anacystis nidulans R2), this protein is Phosphoribosylformylglycinamidine cyclo-ligase.